Here is a 755-residue protein sequence, read N- to C-terminus: Exocyst complex component 3 (755 aa).

2 coiled-coil regions span residues 34-62 (DQLD…AAIQ) and 618-649 (RAVM…QLRF). Lys-38 is modified (N6-acetyllysine).

It belongs to the SEC6 family. As to quaternary structure, the exocyst complex is composed of EXOC1, EXOC2, EXOC3, EXOC4, EXOC5, EXOC6, EXOC7 and EXOC8. Interacts with EXOC3L1. Interacts with BIRC6/bruce. Interacts with MYRIP. Interacts with SLC6A9. In terms of tissue distribution, widely expressed, with highest levels in kidney, followed by brain (at protein level).

It is found in the cytoplasm. The protein resides in the perinuclear region. Its subcellular location is the cell projection. The protein localises to the growth cone. It localises to the neuron projection. It is found in the midbody. The protein resides in the golgi apparatus. Its function is as follows. Component of the exocyst complex involved in the docking of exocytic vesicles with fusion sites on the plasma membrane. The sequence is that of Exocyst complex component 3 (Exoc3) from Rattus norvegicus (Rat).